The following is a 132-amino-acid chain: MAEQFSMLRSELTELLLVAVGAVPGALLRWQLAHHLGDQNLLVNVLGAALLGLLAGRPVAPRRQLLVGIGFCGSLTTFSSWMLAAMKHVSAGDWPAALGLIGLTLGLGLGAAALGFSLGRRLRPPEQPRSEP.

The next 4 helical transmembrane spans lie at Leu-12–Leu-32, Leu-41–Pro-61, Leu-65–Ala-85, and Ala-96–Phe-116. Residues Gly-73 and Thr-76 each contribute to the Na(+) site.

This sequence belongs to the fluoride channel Fluc/FEX (TC 1.A.43) family.

It localises to the cell inner membrane. The enzyme catalyses fluoride(in) = fluoride(out). Na(+) is not transported, but it plays an essential structural role and its presence is essential for fluoride channel function. Its function is as follows. Fluoride-specific ion channel. Important for reducing fluoride concentration in the cell, thus reducing its toxicity. This chain is Fluoride-specific ion channel FluC 2, found in Parasynechococcus marenigrum (strain WH8102).